The following is a 796-amino-acid chain: Probable phosphoketolase (796 aa).

It belongs to the XFP family. Thiamine diphosphate is required as a cofactor.

In Clostridium acetobutylicum (strain ATCC 824 / DSM 792 / JCM 1419 / IAM 19013 / LMG 5710 / NBRC 13948 / NRRL B-527 / VKM B-1787 / 2291 / W), this protein is Probable phosphoketolase.